Reading from the N-terminus, the 128-residue chain is Ribosome-binding factor A (128 aa).

The protein belongs to the RbfA family. Monomer. Binds 30S ribosomal subunits, but not 50S ribosomal subunits or 70S ribosomes.

Its subcellular location is the cytoplasm. Its function is as follows. One of several proteins that assist in the late maturation steps of the functional core of the 30S ribosomal subunit. Associates with free 30S ribosomal subunits (but not with 30S subunits that are part of 70S ribosomes or polysomes). Required for efficient processing of 16S rRNA. May interact with the 5'-terminal helix region of 16S rRNA. The chain is Ribosome-binding factor A from Acidithiobacillus ferrooxidans (strain ATCC 23270 / DSM 14882 / CIP 104768 / NCIMB 8455) (Ferrobacillus ferrooxidans (strain ATCC 23270)).